Here is a 173-residue protein sequence, read N- to C-terminus: Translation initiation factor IF-3 (173 aa).

Belongs to the IF-3 family. Monomer.

The protein resides in the cytoplasm. IF-3 binds to the 30S ribosomal subunit and shifts the equilibrium between 70S ribosomes and their 50S and 30S subunits in favor of the free subunits, thus enhancing the availability of 30S subunits on which protein synthesis initiation begins. This is Translation initiation factor IF-3 from Lactiplantibacillus plantarum (strain ATCC BAA-793 / NCIMB 8826 / WCFS1) (Lactobacillus plantarum).